Consider the following 86-residue polypeptide: Putative membrane protein insertion efficiency factor (86 aa).

The protein belongs to the UPF0161 family.

The protein resides in the cell inner membrane. In terms of biological role, could be involved in insertion of integral membrane proteins into the membrane. The protein is Putative membrane protein insertion efficiency factor of Haemophilus influenzae (strain 86-028NP).